We begin with the raw amino-acid sequence, 706 residues long: Dihydroxyacetone synthase (706 aa).

Residues histidine 76 and 126–128 (GPL) contribute to the thiamine diphosphate site. The Mg(2+) site is built by aspartate 167, asparagine 197, and valine 199. Thiamine diphosphate is bound at residue asparagine 197. The thiamine diphosphate site is built by histidine 273, glutamate 431, and phenylalanine 459. The Proton donor role is filled by glutamate 431. The short motif at 704–706 (NHL) is the Microbody targeting signal element.

It belongs to the transketolase family. It depends on Mg(2+) as a cofactor. The cofactor is Ca(2+). Mn(2+) is required as a cofactor. Co(2+) serves as cofactor. Requires thiamine diphosphate as cofactor.

The protein localises to the peroxisome. It carries out the reaction D-xylulose 5-phosphate + formaldehyde = dihydroxyacetone + D-glyceraldehyde 3-phosphate. Involved in assimilation of formaldehyde. In Candida boidinii (Yeast), this protein is Dihydroxyacetone synthase (DAS1).